Consider the following 270-residue polypeptide: MGNKLVLVLVAVALVMGPKNVSAQNCGCAEGLCCSQYGYCGTGEDYCGTGCQQGPCTTASPPPSNNVNADILTADFLNGIIDQADSGCAGKNFYTRDAFLSALNSYTDFGRVGSEDDSKREIAAAFAHFTHETGHFCYIEEIDGASKDYCDEESIAQYPCSSSKGYHGRGPIQLSWNFNYGPAGSANNFDGLGAPETVSNDVVVSFKTALWYWMQHVRPVINQGFGATIRAINGALECDGANPTTVQARVNYYTEYCRQLGVATGDNLTC.

The N-terminal stretch at 1-23 (MGNKLVLVLVAVALVMGPKNVSA) is a signal peptide. Residues 24-58 (QNCGCAEGLCCSQYGYCGTGEDYCGTGCQQGPCTT) enclose the Chitin-binding type-1 domain. 7 disulfides stabilise this stretch: Cys-26–Cys-34, Cys-28–Cys-40, Cys-33–Cys-47, Cys-51–Cys-56, Cys-88–Cys-137, Cys-150–Cys-160, and Cys-238–Cys-270. The active-site Proton donor is Glu-132.

This sequence belongs to the glycosyl hydrolase 19 family. Chitinase class I subfamily.

The enzyme catalyses Random endo-hydrolysis of N-acetyl-beta-D-glucosaminide (1-&gt;4)-beta-linkages in chitin and chitodextrins.. Its function is as follows. Defense against chitin-containing fungal pathogens. The chain is Endochitinase PR4 (CHI4) from Phaseolus vulgaris (Kidney bean).